A 102-amino-acid chain; its full sequence is Co-chaperonin GroES (102 aa).

The protein belongs to the GroES chaperonin family. Heptamer of 7 subunits arranged in a ring. Interacts with the chaperonin GroEL.

It is found in the cytoplasm. In terms of biological role, together with the chaperonin GroEL, plays an essential role in assisting protein folding. The GroEL-GroES system forms a nano-cage that allows encapsulation of the non-native substrate proteins and provides a physical environment optimized to promote and accelerate protein folding. GroES binds to the apical surface of the GroEL ring, thereby capping the opening of the GroEL channel. The polypeptide is Co-chaperonin GroES (Anabaena sp. (strain L31)).